The chain runs to 301 residues: Acidic endochitinase (301 aa).

Residues 1 to 25 form the signal peptide; that stretch reads MARTPQSTPLLISLSVLALLQTSYA. The GH18 domain maps to 26–301; it reads GGIAIYWGQN…GYSSSIKSSV (276 aa). 2 cysteine pairs are disulfide-bonded: C45-C92 and C75-C82. E152 functions as the Proton donor in the catalytic mechanism. A disulfide bridge links C187 with C216.

The protein belongs to the glycosyl hydrolase 18 family. Chitinase class II subfamily.

The enzyme catalyses Random endo-hydrolysis of N-acetyl-beta-D-glucosaminide (1-&gt;4)-beta-linkages in chitin and chitodextrins.. Its function is as follows. Defense against chitin containing fungal pathogens. This Vitis vinifera (Grape) protein is Acidic endochitinase (CHIT3).